The chain runs to 297 residues: Ribosomal protein L11 methyltransferase (297 aa).

S-adenosyl-L-methionine contacts are provided by Thr-150, Gly-171, Asp-193, and Asn-233.

Belongs to the methyltransferase superfamily. PrmA family.

It is found in the cytoplasm. The catalysed reaction is L-lysyl-[protein] + 3 S-adenosyl-L-methionine = N(6),N(6),N(6)-trimethyl-L-lysyl-[protein] + 3 S-adenosyl-L-homocysteine + 3 H(+). Its function is as follows. Methylates ribosomal protein L11. The protein is Ribosomal protein L11 methyltransferase of Laribacter hongkongensis (strain HLHK9).